The chain runs to 352 residues: Mitochondrial ubiquitin ligase activator of NFKB 1 (352 aa).

Over 1–8 (MENGGRPS) the chain is Cytoplasmic. Residues 9 to 29 (LCQFILLGTTSVVTAALYSVY) form a helical membrane-spanning segment. Topologically, residues 30–238 (RQKAWVSQEL…LLQRQESSVR (209 aa)) are mitochondrial intermembrane. A Glycyl lysine isopeptide (Lys-Gly) (interchain with G-Cter in ubiquitin) cross-link involves residue Lys-52. A helical transmembrane segment spans residues 239 to 259 (LWKVLALVFGFATCATLFFIL). The Cytoplasmic portion of the chain corresponds to 260 to 352 (RKQYLQRQER…ITRVIPLYNS (93 aa)). Residues Lys-273 and Lys-299 each participate in a glycyl lysine isopeptide (Lys-Gly) (interchain with G-Cter in ubiquitin) cross-link. The segment at 302 to 340 (CVVCLSSFKSCVFLECGHVCSCTECYRALPEPKKCPICR) adopts an RING-type zinc-finger fold.

In terms of assembly, homooligomer. Interacts with MAP3K7/TAK1. Interacts with UBC9. Interacts with and sumoylates DNM1L. Interacts with MAVS. Interacts with TP53 (via N-terminus); the interaction leads to ubiquitination and proteasomal degradation of TP53. Post-translationally, ubiquitinated by PRKN during mitophagy, leading to its degradation and enhancement of mitophagy. Deubiquitinated by USP30.

Its subcellular location is the mitochondrion outer membrane. It localises to the peroxisome. The enzyme catalyses S-ubiquitinyl-[E2 ubiquitin-conjugating enzyme]-L-cysteine + [acceptor protein]-L-lysine = [E2 ubiquitin-conjugating enzyme]-L-cysteine + N(6)-ubiquitinyl-[acceptor protein]-L-lysine.. It participates in protein modification; protein ubiquitination. Its pathway is protein modification; protein sumoylation. Exhibits weak E3 ubiquitin-protein ligase activity. E3 ubiquitin ligases accept ubiquitin from an E2 ubiquitin-conjugating enzyme in the form of a thioester and then directly transfer the ubiquitin to targeted substrates. Can ubiquitinate AKT1 preferentially at 'Lys-284' involving 'Lys-48'-linked polyubiquitination and seems to be involved in regulation of Akt signaling by targeting phosphorylated Akt to proteasomal degradation. Mediates polyubiquitination of cytoplasmic TP53 at 'Lys-24' which targets TP53 for proteasomal degradation, thus reducing TP53 levels in the cytoplasm and mitochondrion. Proposed to preferentially act as a SUMO E3 ligase at physiological concentrations. Plays a role in the control of mitochondrial morphology by promoting mitochondrial fragmentation, and influences mitochondrial localization. Likely to promote mitochondrial fission through negatively regulating the mitochondrial fusion proteins MFN1 and MFN2, acting in a pathway that is parallel to the PRKN/PINK1 regulatory pathway. May also be involved in the sumoylation of the membrane fission protein DNM1L. Inhibits cell growth. When overexpressed, activates JNK through MAP3K7/TAK1 and induces caspase-dependent apoptosis. Involved in the modulation of innate immune defense against viruses by inhibiting RIGI-dependent antiviral response. Can mediate RIGI sumoylation and disrupt its polyubiquitination. This chain is Mitochondrial ubiquitin ligase activator of NFKB 1 (MUL1), found in Macaca fascicularis (Crab-eating macaque).